Here is a 164-residue protein sequence, read N- to C-terminus: UPF0305 protein MTH_812 (164 aa).

It belongs to the UPF0305 family.

This Methanothermobacter thermautotrophicus (strain ATCC 29096 / DSM 1053 / JCM 10044 / NBRC 100330 / Delta H) (Methanobacterium thermoautotrophicum) protein is UPF0305 protein MTH_812.